We begin with the raw amino-acid sequence, 340 residues long: Arginase 1, mitochondrial (340 aa).

The N-terminal 24 residues, 1 to 24 (MGGVAAGTRWIHHVRRLSAAKVSA), are a transit peptide targeting the mitochondrion. 4 residues coordinate Mn(2+): His-159, Asp-183, His-185, and Asp-187. Residues 185 to 189 (HPDIY) and 193 to 195 (EGN) contribute to the substrate site. Positions 268 and 270 each coordinate Mn(2+). Glu-311 provides a ligand contact to substrate.

The protein belongs to the arginase family. Mn(2+) serves as cofactor.

The protein localises to the mitochondrion. The enzyme catalyses L-arginine + H2O = urea + L-ornithine. It functions in the pathway nitrogen metabolism; urea cycle; L-ornithine and urea from L-arginine: step 1/1. Its function is as follows. Catalyzes the hydrolysis of L-arginine to urea and L-ornithine. The latter can be utilized in the urea cycle or as a precursor for the synthesis of both polyamines and proline. In Oryza sativa subsp. japonica (Rice), this protein is Arginase 1, mitochondrial (ARG1).